The following is a 373-amino-acid chain: Mannitol-1-phosphate 5-dehydrogenase (373 aa).

An NAD(+)-binding site is contributed by 3-14 (ALHFGAGNIGRG).

It belongs to the mannitol dehydrogenase family.

It carries out the reaction D-mannitol 1-phosphate + NAD(+) = beta-D-fructose 6-phosphate + NADH + H(+). This Bacillus subtilis (strain 168) protein is Mannitol-1-phosphate 5-dehydrogenase (mtlD).